A 309-amino-acid chain; its full sequence is Protoheme IX farnesyltransferase (309 aa).

9 consecutive transmembrane segments (helical) span residues 35–55 (IGIV…AFYF), 64–84 (LHLV…SCAI), 114–134 (VLWL…MTTV), 135–155 (TAAV…TLWT), 161–181 (INTV…WTAV), 187–207 (IVPL…FLAL), 231–251 (MTKR…FYLF), 253–273 (LGVP…LLGL), and 289–309 (FVYS…ATLW).

It belongs to the UbiA prenyltransferase family. Protoheme IX farnesyltransferase subfamily. Interacts with CtaA.

The protein resides in the cell membrane. The catalysed reaction is heme b + (2E,6E)-farnesyl diphosphate + H2O = Fe(II)-heme o + diphosphate. It functions in the pathway porphyrin-containing compound metabolism; heme O biosynthesis; heme O from protoheme: step 1/1. Converts heme B (protoheme IX) to heme O by substitution of the vinyl group on carbon 2 of heme B porphyrin ring with a hydroxyethyl farnesyl side group. The chain is Protoheme IX farnesyltransferase from Geobacillus kaustophilus (strain HTA426).